The primary structure comprises 256 residues: Pimeloyl-[acyl-carrier protein] methyl ester esterase (256 aa).

Positions 15–242 (HLVLLHGWGL…AAHAPFISHP (228 aa)) constitute an AB hydrolase-1 domain. Residues tryptophan 22, 82-83 (SL), and 143-147 (FLALQ) contribute to the substrate site. Catalysis depends on serine 82, which acts as the Nucleophile. Catalysis depends on residues aspartate 207 and histidine 235. Substrate is bound at residue histidine 235.

The protein belongs to the AB hydrolase superfamily. Carboxylesterase BioH family. As to quaternary structure, monomer.

The protein localises to the cytoplasm. The catalysed reaction is 6-carboxyhexanoyl-[ACP] methyl ester + H2O = 6-carboxyhexanoyl-[ACP] + methanol + H(+). The protein operates within cofactor biosynthesis; biotin biosynthesis. The physiological role of BioH is to remove the methyl group introduced by BioC when the pimeloyl moiety is complete. It allows to synthesize pimeloyl-ACP via the fatty acid synthetic pathway through the hydrolysis of the ester bonds of pimeloyl-ACP esters. This Escherichia coli O139:H28 (strain E24377A / ETEC) protein is Pimeloyl-[acyl-carrier protein] methyl ester esterase.